Reading from the N-terminus, the 539-residue chain is Bifunctional purine biosynthesis protein PurH (539 aa).

The MGS-like domain maps to 8-159; sequence FPIPDLHRVR…KNYAYTGVVT (152 aa).

Belongs to the PurH family.

It catalyses the reaction (6R)-10-formyltetrahydrofolate + 5-amino-1-(5-phospho-beta-D-ribosyl)imidazole-4-carboxamide = 5-formamido-1-(5-phospho-D-ribosyl)imidazole-4-carboxamide + (6S)-5,6,7,8-tetrahydrofolate. The enzyme catalyses IMP + H2O = 5-formamido-1-(5-phospho-D-ribosyl)imidazole-4-carboxamide. It functions in the pathway purine metabolism; IMP biosynthesis via de novo pathway; 5-formamido-1-(5-phospho-D-ribosyl)imidazole-4-carboxamide from 5-amino-1-(5-phospho-D-ribosyl)imidazole-4-carboxamide (10-formyl THF route): step 1/1. It participates in purine metabolism; IMP biosynthesis via de novo pathway; IMP from 5-formamido-1-(5-phospho-D-ribosyl)imidazole-4-carboxamide: step 1/1. The protein is Bifunctional purine biosynthesis protein PurH of Bartonella tribocorum (strain CIP 105476 / IBS 506).